A 360-amino-acid chain; its full sequence is Phospho-N-acetylmuramoyl-pentapeptide-transferase (360 aa).

The next 10 helical transmembrane spans lie at 27-47 (IVSLLTALVISLWMGPHMIAW), 73-93 (TMGGVMILVAIIVSVLMWANL), 94-114 (SNPYVWCVLLVLAGYGAVGFV), 132-152 (WKYFWQSVIALVVAFSMYAIG), 168-188 (VMPQLGLLYVALAYFVIVGTS), 199-219 (GLAIMPTVFVAAGFALVAWAT), 236-256 (ASELVIVCTAIVGAGLGFLWF), 263-283 (VFMGDVGSLALGGALGTIAVL), 288-308 (FLLVIMGGVFVVETLSVILQV), and 338-358 (VIVRFWIISLMLVLIGLATLK).

Belongs to the glycosyltransferase 4 family. MraY subfamily. The cofactor is Mg(2+).

It is found in the cell inner membrane. The enzyme catalyses UDP-N-acetyl-alpha-D-muramoyl-L-alanyl-gamma-D-glutamyl-meso-2,6-diaminopimeloyl-D-alanyl-D-alanine + di-trans,octa-cis-undecaprenyl phosphate = di-trans,octa-cis-undecaprenyl diphospho-N-acetyl-alpha-D-muramoyl-L-alanyl-D-glutamyl-meso-2,6-diaminopimeloyl-D-alanyl-D-alanine + UMP. Its pathway is cell wall biogenesis; peptidoglycan biosynthesis. Its function is as follows. Catalyzes the initial step of the lipid cycle reactions in the biosynthesis of the cell wall peptidoglycan: transfers peptidoglycan precursor phospho-MurNAc-pentapeptide from UDP-MurNAc-pentapeptide onto the lipid carrier undecaprenyl phosphate, yielding undecaprenyl-pyrophosphoryl-MurNAc-pentapeptide, known as lipid I. The polypeptide is Phospho-N-acetylmuramoyl-pentapeptide-transferase (Pectobacterium carotovorum subsp. carotovorum (strain PC1)).